We begin with the raw amino-acid sequence, 750 residues long: Photosystem I P700 chlorophyll a apoprotein A1 (750 aa).

The next 8 membrane-spanning stretches (helical) occupy residues 70–93 (VFSA…FHGA), 156–179 (LYCT…FHYH), 195–219 (LNHH…HVSL), 291–309 (IAHH…GHMY), 346–369 (WHAQ…HHMY), 385–411 (LSLF…IFMV), 433–455 (AIIS…LYIH), and 531–549 (FLVH…LILL). Positions 573 and 582 each coordinate [4Fe-4S] cluster. 2 helical membrane-spanning segments follow: residues 589 to 610 (HVFL…HFSW) and 664 to 686 (LSAY…MFLF). A chlorophyll a'-binding site is contributed by histidine 675. The chlorophyll a site is built by methionine 683 and tyrosine 691. Tryptophan 692 is a binding site for phylloquinone. The chain crosses the membrane as a helical span at residues 724-744 (AVGVTHYLLGGIATTWAFFLA).

The protein belongs to the PsaA/PsaB family. As to quaternary structure, the PsaA/B heterodimer binds the P700 chlorophyll special pair and subsequent electron acceptors. PSI consists of a core antenna complex that captures photons, and an electron transfer chain that converts photonic excitation into a charge separation. The eukaryotic PSI reaction center is composed of at least 11 subunits. P700 is a chlorophyll a/chlorophyll a' dimer, A0 is one or more chlorophyll a, A1 is one or both phylloquinones and FX is a shared 4Fe-4S iron-sulfur center. is required as a cofactor.

It localises to the plastid. The protein resides in the chloroplast thylakoid membrane. It catalyses the reaction reduced [plastocyanin] + hnu + oxidized [2Fe-2S]-[ferredoxin] = oxidized [plastocyanin] + reduced [2Fe-2S]-[ferredoxin]. Functionally, psaA and PsaB bind P700, the primary electron donor of photosystem I (PSI), as well as the electron acceptors A0, A1 and FX. PSI is a plastocyanin-ferredoxin oxidoreductase, converting photonic excitation into a charge separation, which transfers an electron from the donor P700 chlorophyll pair to the spectroscopically characterized acceptors A0, A1, FX, FA and FB in turn. Oxidized P700 is reduced on the lumenal side of the thylakoid membrane by plastocyanin. The chain is Photosystem I P700 chlorophyll a apoprotein A1 from Acorus calamus (Sweet flag).